The following is a 544-amino-acid chain: Chaperonin GroEL (544 aa).

Residues 30–33 (TLGP), Lys51, 87–91 (DGTTT), Gly415, and Asp495 each bind ATP.

Belongs to the chaperonin (HSP60) family. In terms of assembly, forms a cylinder of 14 subunits composed of two heptameric rings stacked back-to-back. Interacts with the co-chaperonin GroES.

It is found in the cell outer membrane. The enzyme catalyses ATP + H2O + a folded polypeptide = ADP + phosphate + an unfolded polypeptide.. Its function is as follows. Together with its co-chaperonin GroES, plays an essential role in assisting protein folding. The GroEL-GroES system forms a nano-cage that allows encapsulation of the non-native substrate proteins and provides a physical environment optimized to promote and accelerate protein folding. This Neisseria gonorrhoeae protein is Chaperonin GroEL.